Here is a 465-residue protein sequence, read N- to C-terminus: MGSKTPHNHRRGPNESSSPPAIDAINPPKQAAASGLVHGSLEGESEGGEDEDDDKPGADLKAVGQIGNDGQKRNKRKKKKKKKNTKELEILQTTPPRVALANIFRSQRYPEAEIVKYSTDNDNLQRTTTEELRHLSVLNAMDDEFLNDYRKAAEVHRQVRQYVQTIIKPGIALSQLAPEIEDGVRALTNHQGLETGDALKAGMAFPTGLCLNNIAAHWTPNPGAKEVILQYDDVLKIDFGVHVNGRIVDSAFTMAFNPVYDNLLAAVKDATNAGLKEAGIDSRIAHISEAIQEVMESYEVELNRKVIPVKAVRNITGHNILHYKIHGDKQVPFVKTQTNQRMEEGDVFAIETFGSTGKAYLDDATGIYGYGYDENSSTTGLHHSSAKSLLKTIKENFGTLVFSRRYLERLGVQRYHLGMRSLVTNGIVQSYAPLVDVPGSYVAQFEHTVLLRPNCKEVISRGDDY.

Basic residues predominate over residues 1–11 (MGSKTPHNHRR). The segment at 1-89 (MGSKTPHNHR…KKKKNTKELE (89 aa)) is disordered. Over residues 43–54 (GESEGGEDEDDD) the composition is skewed to acidic residues. The span at 73–84 (RNKRKKKKKKKN) shows a compositional bias: basic residues. His-217 contacts substrate. 3 residues coordinate a divalent metal cation: Asp-238, Asp-249, and His-318. Residue His-326 participates in substrate binding. A divalent metal cation contacts are provided by Glu-351 and Glu-446.

The protein belongs to the peptidase M24A family. Methionine aminopeptidase eukaryotic type 2 subfamily. It depends on Co(2+) as a cofactor. Requires Zn(2+) as cofactor. The cofactor is Mn(2+). Fe(2+) serves as cofactor.

The protein resides in the cytoplasm. The enzyme catalyses Release of N-terminal amino acids, preferentially methionine, from peptides and arylamides.. In terms of biological role, cotranslationally removes the N-terminal methionine from nascent proteins. The N-terminal methionine is often cleaved when the second residue in the primary sequence is small and uncharged (Met-Ala-, Cys, Gly, Pro, Ser, Thr, or Val). In Ajellomyces capsulatus (strain G186AR / H82 / ATCC MYA-2454 / RMSCC 2432) (Darling's disease fungus), this protein is Methionine aminopeptidase 2-2.